The following is a 383-amino-acid chain: Lipid-A-disaccharide synthase (383 aa).

The protein belongs to the LpxB family.

It carries out the reaction a lipid X + a UDP-2-N,3-O-bis[(3R)-3-hydroxyacyl]-alpha-D-glucosamine = a lipid A disaccharide + UDP + H(+). Its pathway is bacterial outer membrane biogenesis; LPS lipid A biosynthesis. Functionally, condensation of UDP-2,3-diacylglucosamine and 2,3-diacylglucosamine-1-phosphate to form lipid A disaccharide, a precursor of lipid A, a phosphorylated glycolipid that anchors the lipopolysaccharide to the outer membrane of the cell. This chain is Lipid-A-disaccharide synthase, found in Syntrophus aciditrophicus (strain SB).